A 388-amino-acid polypeptide reads, in one-letter code: Protein RecA (388 aa).

ATP is bound at residue 79 to 86; it reads GPESSGKT. The tract at residues 347 to 372 is disordered; it reads IDGEEVSEQDTENKKDEPKKEEAVNE. The span at 357-369 shows a compositional bias: basic and acidic residues; it reads TENKKDEPKKEEA.

Belongs to the RecA family.

The protein resides in the cytoplasm. In terms of biological role, can catalyze the hydrolysis of ATP in the presence of single-stranded DNA, the ATP-dependent uptake of single-stranded DNA by duplex DNA, and the ATP-dependent hybridization of homologous single-stranded DNAs. It interacts with LexA causing its activation and leading to its autocatalytic cleavage. In Streptococcus pneumoniae (strain CGSP14), this protein is Protein RecA.